The following is a 116-amino-acid chain: Iron-sulfur cluster insertion protein ErpA (116 aa).

Iron-sulfur cluster contacts are provided by Cys44, Cys108, and Cys110.

It belongs to the HesB/IscA family. As to quaternary structure, homodimer. The cofactor is iron-sulfur cluster.

In terms of biological role, required for insertion of 4Fe-4S clusters for at least IspG. This chain is Iron-sulfur cluster insertion protein ErpA, found in Pseudomonas fluorescens (strain Pf0-1).